The sequence spans 273 residues: MSAIPSSNKRRTIPELRARKGKSPIVALTAYSALTARFVDPYADFILVGDSLAMVEHGMATTIGASLDMMILHGQSVMRGSEKAAVVIDMPFGSYEASPQEAYHNAVRILSETGCSAVKLEGGSHLAPVIAFLTARGVPVMGHIGLTPQYVQTLGGFKIQGHSSEQQDKIKQDALDFEAAGAFSVVLEGVTEPLAREITDNIAIPTIGIGASSYCDGQVLVLEDMLGFNDKVPRFVKKFAHLGDDIKKAVSDYATAVSNRSFPAEDNIYRPKS.

2 residues coordinate Mg(2+): aspartate 50 and aspartate 89. Residues 50–51 (DS), aspartate 89, and lysine 119 each bind 3-methyl-2-oxobutanoate. Residue glutamate 121 coordinates Mg(2+). The Proton acceptor role is filled by glutamate 188.

It belongs to the PanB family. Homodecamer; pentamer of dimers. Mg(2+) is required as a cofactor.

Its subcellular location is the cytoplasm. The catalysed reaction is 3-methyl-2-oxobutanoate + (6R)-5,10-methylene-5,6,7,8-tetrahydrofolate + H2O = 2-dehydropantoate + (6S)-5,6,7,8-tetrahydrofolate. Its pathway is cofactor biosynthesis; (R)-pantothenate biosynthesis; (R)-pantoate from 3-methyl-2-oxobutanoate: step 1/2. Functionally, catalyzes the reversible reaction in which hydroxymethyl group from 5,10-methylenetetrahydrofolate is transferred onto alpha-ketoisovalerate to form ketopantoate. The chain is 3-methyl-2-oxobutanoate hydroxymethyltransferase 2 from Zymomonas mobilis subsp. mobilis (strain ATCC 31821 / ZM4 / CP4).